The chain runs to 266 residues: Thymidylate synthase (266 aa).

A dUMP-binding site is contributed by Arg24. Residue His54 coordinates (6R)-5,10-methylene-5,6,7,8-tetrahydrofolate. Residue 129 to 130 (RR) coordinates dUMP. The active-site Nucleophile is Cys149. Residues 169 to 172 (RSAD), Asn180, and 210 to 212 (HIY) each bind dUMP. Asp172 is a (6R)-5,10-methylene-5,6,7,8-tetrahydrofolate binding site. Residue Ala265 participates in (6R)-5,10-methylene-5,6,7,8-tetrahydrofolate binding.

It belongs to the thymidylate synthase family. Bacterial-type ThyA subfamily. In terms of assembly, homodimer.

It is found in the cytoplasm. It carries out the reaction dUMP + (6R)-5,10-methylene-5,6,7,8-tetrahydrofolate = 7,8-dihydrofolate + dTMP. It functions in the pathway pyrimidine metabolism; dTTP biosynthesis. Its function is as follows. Catalyzes the reductive methylation of 2'-deoxyuridine-5'-monophosphate (dUMP) to 2'-deoxythymidine-5'-monophosphate (dTMP) while utilizing 5,10-methylenetetrahydrofolate (mTHF) as the methyl donor and reductant in the reaction, yielding dihydrofolate (DHF) as a by-product. This enzymatic reaction provides an intracellular de novo source of dTMP, an essential precursor for DNA biosynthesis. This is Thymidylate synthase from Mycobacterium leprae (strain TN).